We begin with the raw amino-acid sequence, 185 residues long: UPF0301 protein HDEF_0602 (185 aa).

Belongs to the UPF0301 (AlgH) family.

This chain is UPF0301 protein HDEF_0602, found in Hamiltonella defensa subsp. Acyrthosiphon pisum (strain 5AT).